Reading from the N-terminus, the 873-residue chain is Tyrosine-protein kinase receptor TYRO3 (873 aa).

The signal sequence occupies residues 1-28; sequence MELRRSMALPRLLLLGLWAAALRDGAVA. Ig-like C2-type domains follow at residues 29–116 and 127–208; these read AGMK…KEES and PYFT…ATVQ. Residues 29–416 are Extracellular-facing; it reads AGMKFTGSPI…QRQPPYGTSW (388 aa). N-linked (GlcNAc...) asparagine glycosylation is present at Asn-51. Disulfide bonds link Cys-52–Cys-105 and Cys-148–Cys-191. Residues Asn-179, Asn-184, Asn-218, Asn-228, Asn-281, Asn-353, and Asn-367 are each glycosylated (N-linked (GlcNAc...) asparagine). Fibronectin type-III domains lie at 215-308 and 310-403; these read PPLN…TLEL and PSST…AQEV. A helical transmembrane segment spans residues 417 to 437; sequence VPVALGILTALVTAVALALIL. Residues 438–873 are Cytoplasmic-facing; sequence LRKRRKETRF…ELETEGEKSC (436 aa). The Protein kinase domain occupies 505–776; sequence FTLGRMLGKG…GVLRSQLEMI (272 aa). ATP contacts are provided by residues 511–519 and Lys-537; that span reads LGKGEFGSV. The Proton acceptor role is filled by Asp-642. Residue Tyr-673 is modified to Phosphotyrosine; by autocatalysis. Residues 845–873 form a disordered region; it reads VEGERHPEGQEGENKSLLYELETEGEKSC. Positions 847 to 858 are enriched in basic and acidic residues; that stretch reads GERHPEGQEGEN.

The protein belongs to the protein kinase superfamily. Tyr protein kinase family. AXL/UFO subfamily. In terms of processing, autophosphorylated on tyrosine residues. As to expression, detected in embryonic retina (at protein level). detected in brain, retina, kidney and in retinal Mueller glia-like cells.

The protein resides in the cell membrane. It carries out the reaction L-tyrosyl-[protein] + ATP = O-phospho-L-tyrosyl-[protein] + ADP + H(+). Receptor tyrosine kinase that transduces signals from the extracellular matrix into the cytoplasm by binding to several ligands. Regulates many physiological processes including cell survival, migration and differentiation. Ligand binding at the cell surface induces dimerization and autophosphorylation of TYRO3 on its intracellular domain that provides docking sites for downstream signaling molecules. Following activation by ligand, enhances PI3-kinase activity and activates the AKT survival pathway, including nuclear translocation of NF-kappa-B and up-regulation of transcription of NF-kappa-B-regulated genes. The chain is Tyrosine-protein kinase receptor TYRO3 (TYRO3) from Gallus gallus (Chicken).